Consider the following 484-residue polypeptide: MALELILVLSSLIVILIIFFSFKSNGKSENKLAKLPPGQMGWPFIGQTIPFMQPHSSASLGLFMDQNIAKYGRIFRTNLLAKPTIVSADPDFNRYILQNEGRLFENSCPTSIKEIMGPWSMLALAGDIHREMRSIAVNFMSNVKLRTYFLPDIEQQAIKVLASWENTPEAFSAQEQGKKFAFNLMVKHLMSMDPGMPETEKLRTEYHAFMKGMASIPLNLPGTAYRKALQSRSIILKIMGQKLDERIRQVRDGCEGLEQDDLLASVSKHPHLTKEQILDLILSMLFAGHETSSAAIALAIYFLDSCPKAAQQLREEHVEIARQKAERGETGLNWDDYKQMEFTHCVINETLRLGNIVKFLHRKTLKDVQFKGYDIPCGWEVVTIISAAHLDPSVYDEPQRYNPWRWQNISATASKNNSIMSFSGGPRLCPGAELAKLEMAVFLHHLVRKFHWELAEHDYPVSFPFLGFPKGLPIKVRPLEKSEA.

A helical membrane pass occupies residues 2–22; sequence ALELILVLSSLIVILIIFFSF. A heme-binding site is contributed by cysteine 429.

Belongs to the cytochrome P450 family. In terms of tissue distribution, expressed in roots.

It localises to the membrane. It catalyses the reaction cholesterol + reduced [NADPH--hemoprotein reductase] + O2 = (22R)-hydroxycholesterol + oxidized [NADPH--hemoprotein reductase] + H2O + H(+). The protein operates within steroid metabolism; cholesterol metabolism. Functionally, involved in the biosynthesis of steroidal saponins and alkaloids natural products from cholesterol such as spirostane-type saponins and polyphyllins, compounds with pharmacological activity. Catalyzes the C-22 hydroxylation of cholesterol to form 22R-hydroxycholesterol. This is Cholesterol 22-hydroxylase CYP90B27 from Paris polyphylla (Daiswa polyphylla).